Reading from the N-terminus, the 135-residue chain is Large ribosomal subunit protein uL16c (135 aa).

A compositionally biased stretch (basic residues) spans 1 to 23 (MLSPKKTKFRKEHRGRMKGRSSR). The segment at 1–24 (MLSPKKTKFRKEHRGRMKGRSSRG) is disordered.

It belongs to the universal ribosomal protein uL16 family. Part of the 50S ribosomal subunit.

The protein localises to the plastid. It localises to the chloroplast. The polypeptide is Large ribosomal subunit protein uL16c (Pelargonium hortorum (Common geranium)).